The primary structure comprises 298 residues: ATP phosphoribosyltransferase (298 aa).

Belongs to the ATP phosphoribosyltransferase family. Long subfamily. Mg(2+) serves as cofactor.

It localises to the cytoplasm. It catalyses the reaction 1-(5-phospho-beta-D-ribosyl)-ATP + diphosphate = 5-phospho-alpha-D-ribose 1-diphosphate + ATP. It participates in amino-acid biosynthesis; L-histidine biosynthesis; L-histidine from 5-phospho-alpha-D-ribose 1-diphosphate: step 1/9. With respect to regulation, feedback inhibited by histidine. Its function is as follows. Catalyzes the condensation of ATP and 5-phosphoribose 1-diphosphate to form N'-(5'-phosphoribosyl)-ATP (PR-ATP). Has a crucial role in the pathway because the rate of histidine biosynthesis seems to be controlled primarily by regulation of HisG enzymatic activity. This chain is ATP phosphoribosyltransferase, found in Vibrio campbellii (strain ATCC BAA-1116).